Reading from the N-terminus, the 262-residue chain is Hydroxyethylthiazole kinase (262 aa).

Met50 is a substrate binding site. ATP is bound by residues Arg125 and Thr171. Gly198 contacts substrate.

The protein belongs to the Thz kinase family. The cofactor is Mg(2+).

The catalysed reaction is 5-(2-hydroxyethyl)-4-methylthiazole + ATP = 4-methyl-5-(2-phosphooxyethyl)-thiazole + ADP + H(+). It participates in cofactor biosynthesis; thiamine diphosphate biosynthesis; 4-methyl-5-(2-phosphoethyl)-thiazole from 5-(2-hydroxyethyl)-4-methylthiazole: step 1/1. In terms of biological role, catalyzes the phosphorylation of the hydroxyl group of 4-methyl-5-beta-hydroxyethylthiazole (THZ). The protein is Hydroxyethylthiazole kinase of Escherichia coli O17:K52:H18 (strain UMN026 / ExPEC).